The chain runs to 295 residues: Tyrosine recombinase XerD (295 aa).

Positions 1–85 constitute a Core-binding (CB) domain; it reads MNTIIEEYLN…TIRSFHQFAL (85 aa). The region spanning 106-289 is the Tyr recombinase domain; the sequence is KLPDVLEIDE…SKSQIRKMYT (184 aa). Residues arginine 146, lysine 170, histidine 241, arginine 244, and histidine 267 contribute to the active site. The active-site O-(3'-phospho-DNA)-tyrosine intermediate is tyrosine 276.

Belongs to the 'phage' integrase family. XerD subfamily. As to quaternary structure, forms a cyclic heterotetrameric complex composed of two molecules of XerC and two molecules of XerD.

It is found in the cytoplasm. Site-specific tyrosine recombinase, which acts by catalyzing the cutting and rejoining of the recombining DNA molecules. The XerC-XerD complex is essential to convert dimers of the bacterial chromosome into monomers to permit their segregation at cell division. It also contributes to the segregational stability of plasmids. In Staphylococcus epidermidis (strain ATCC 12228 / FDA PCI 1200), this protein is Tyrosine recombinase XerD.